Consider the following 176-residue polypeptide: Probable DNA-directed RNA polymerase subunit delta (176 aa).

Positions 14–81 (KSFIDMAYTL…GENLWGLRDW (68 aa)) constitute an HTH HARE-type domain. Residues 114 to 176 (LGEDEMDDDD…VFEDEEDFND (63 aa)) form a disordered region. Acidic residues-rich tracts occupy residues 116 to 145 (EDEM…QVEE) and 153 to 176 (VIEE…DFND).

This sequence belongs to the RpoE family. RNAP is composed of a core of 2 alpha, a beta and a beta' subunits. The core is associated with a delta subunit and one of several sigma factors.

Its function is as follows. Participates in both the initiation and recycling phases of transcription. In the presence of the delta subunit, RNAP displays an increased specificity of transcription, a decreased affinity for nucleic acids, and an increased efficiency of RNA synthesis because of enhanced recycling. This Staphylococcus aureus (strain JH1) protein is Probable DNA-directed RNA polymerase subunit delta.